We begin with the raw amino-acid sequence, 20 residues long: Cytosol aminopeptidase (20 aa).

Position 6 is a phosphoserine (S6).

Belongs to the peptidase M17 family. In terms of assembly, homohexamer. Requires Zn(2+) as cofactor. The cofactor is Mn(2+).

The protein localises to the cytoplasm. It carries out the reaction Release of an N-terminal amino acid, Xaa-|-Yaa-, in which Xaa is preferably Leu, but may be other amino acids including Pro although not Arg or Lys, and Yaa may be Pro. Amino acid amides and methyl esters are also readily hydrolyzed, but rates on arylamides are exceedingly low.. The enzyme catalyses an S-substituted L-cysteinylglycine + H2O = an S-substituted L-cysteine + glycine. It catalyses the reaction L-cysteinylglycine + H2O = L-cysteine + glycine. The catalysed reaction is S-benzyl-L-cysteinylglycine + H2O = S-benzyl-L-cysteine + glycine. It carries out the reaction Release of N-terminal proline from a peptide.. Its function is as follows. Cytosolic metallopeptidase that catalyzes the removal of unsubstituted N-terminal hydrophobic amino acids from various peptides. The presence of Zn(2+) ions is essential for the peptidase activity, and the association with other cofactors can modulate the substrate spectificity of the enzyme. For instance, in the presence of Mn(2+), it displays a specific Cys-Gly hydrolyzing activity of Cys-Gly-S-conjugates. Involved in the metabolism of glutathione and in the degradation of glutathione S-conjugates, which may play a role in the control of the cell redox status. This is Cytosol aminopeptidase from Mesocricetus auratus (Golden hamster).